Here is a 176-residue protein sequence, read N- to C-terminus: Disulfide bond formation protein B (176 aa).

Topologically, residues 1 to 14 are cytoplasmic; that stretch reads MLQFLNRCSRGRGA. Residues 15-31 form a helical membrane-spanning segment; sequence WLLMALTAFLLELTALY. The Periplasmic portion of the chain corresponds to 32–49; sequence FQHIMLLQPCVMCIYERV. A disulfide bridge connects residues Cys41 and Cys44. A helical transmembrane segment spans residues 50–65; sequence ALFGILGASLLGAIAP. The Cytoplasmic portion of the chain corresponds to 66-71; that stretch reads RSPLRY. Residues 72-89 form a helical membrane-spanning segment; the sequence is LAIAVWIYSAWKGVQLAW. At 90–144 the chain is on the periplasmic side; that stretch reads AHTMLQLNPSPFNTCDFFVNFPSWLPLDKWLPAVFAASGDCSERQWQFMSLEMPQ. A disulfide bond links Cys104 and Cys130. Residues 145 to 163 traverse the membrane as a helical segment; it reads WLVGIFAAYLVIAVLVLIS. Residues 164 to 176 are Cytoplasmic-facing; that stretch reads QFVKPKRRDLFGR.

Belongs to the DsbB family.

Its subcellular location is the cell inner membrane. Its function is as follows. Required for disulfide bond formation in some periplasmic proteins. Acts by oxidizing the DsbA protein. This is Disulfide bond formation protein B from Yersinia pestis bv. Antiqua (strain Nepal516).